The following is a 607-amino-acid chain: Elongation factor 4 (607 aa).

Residues 6 to 188 (DRIRNFSIIA…AIVARIPAPK (183 aa)) form the tr-type G domain. Residues 18 to 23 (DHGKST) and 135 to 138 (NKID) contribute to the GTP site.

It belongs to the TRAFAC class translation factor GTPase superfamily. Classic translation factor GTPase family. LepA subfamily.

It is found in the cell inner membrane. It carries out the reaction GTP + H2O = GDP + phosphate + H(+). Required for accurate and efficient protein synthesis under certain stress conditions. May act as a fidelity factor of the translation reaction, by catalyzing a one-codon backward translocation of tRNAs on improperly translocated ribosomes. Back-translocation proceeds from a post-translocation (POST) complex to a pre-translocation (PRE) complex, thus giving elongation factor G a second chance to translocate the tRNAs correctly. Binds to ribosomes in a GTP-dependent manner. This chain is Elongation factor 4, found in Rhizorhabdus wittichii (strain DSM 6014 / CCUG 31198 / JCM 15750 / NBRC 105917 / EY 4224 / RW1) (Sphingomonas wittichii).